A 560-amino-acid polypeptide reads, in one-letter code: Developmental and secondary metabolism regulator veA (560 aa).

The Velvet domain occupies 35 to 241 (GRRLWYRMRV…AEQGCRVRIR (207 aa)). Positions 49–54 (ERARAC) match the Nuclear localization signal motif. Disordered regions lie at residues 49 to 70 (ERAR…VDPP), 171 to 197 (KEDK…ATGG), and 250 to 560 (DGKG…RLRY). The segment covering 171-183 (KEDKDKDKERDVE) has biased composition (basic and acidic residues). The span at 336–355 (AAPPQPFAQPPSVPASPVYP) shows a compositional bias: pro residues. Positions 395–405 (PRRESIHHDYR) are enriched in basic and acidic residues. Residues 411–439 (QLPPLPPPPYYPPTPQQSHMPPPQPPQVL) show a composition bias toward pro residues. A compositionally biased stretch (polar residues) spans 444-453 (IDSNSKSNNR). The interval 455–496 (PMPSPTALANSAPRPLASLAPLAPLMQSTSSSAGKGPVHPAT) is PEST. A compositionally biased stretch (low complexity) spans 461-479 (ALANSAPRPLASLAPLAPL). Basic and acidic residues-rich tracts occupy residues 508–535 (RAHD…RSED) and 546–560 (RRAD…RLRY).

The protein belongs to the velvet family. VeA subfamily. In terms of assembly, component of the heterotrimeric velvet complex composed of laeA, veA and velB; VeA acting as a bridging protein between laeA and velB.

It is found in the nucleus. Its subcellular location is the cytoplasm. Its function is as follows. Component of the velvet transcription factor complex that controls sexual/asexual developmental ratio in response to light, promoting sexual development in the darkness while stimulating asexual sporulation under illumination. The velvet complex acts as a global regulator for secondary metabolite gene expression. Positively regulates chaetoglobosin A biosynthesis by controlling the expression of core genes of the chaetoglobosin A biosynthetic gene cluster and other relevant regulators in a light-dependent manner. VeA directly regulates transcription factors brlA, laeA, and the chaetoglobosin A cluster-specific transcription regulator cheR. Also directly regulates the expression of one of the chaetoglobosin A cluster cytochrome P450 monooxygenases (cheE or cheG), but only indirectly regulates the expression of the PKS-NRPS hybrid cheA. Moreover, VeA has a significant effect on the asexual spores production, irrespective of light or dark condition. The protein is Developmental and secondary metabolism regulator veA of Chaetomium globosum (strain ATCC 6205 / CBS 148.51 / DSM 1962 / NBRC 6347 / NRRL 1970) (Soil fungus).